A 285-amino-acid chain; its full sequence is 4-hydroxybenzoate octaprenyltransferase (285 aa).

7 helical membrane-spanning segments follow: residues glycine 20–leucine 39, alanine 92–tryptophan 112, phenylalanine 137–valine 157, glutamate 159–tyrosine 179, tyrosine 206–glycine 226, tyrosine 228–histidine 248, and alanine 260–alanine 280.

This sequence belongs to the UbiA prenyltransferase family. It depends on Mg(2+) as a cofactor.

It is found in the cell inner membrane. The enzyme catalyses all-trans-octaprenyl diphosphate + 4-hydroxybenzoate = 4-hydroxy-3-(all-trans-octaprenyl)benzoate + diphosphate. The protein operates within cofactor biosynthesis; ubiquinone biosynthesis. Functionally, catalyzes the prenylation of para-hydroxybenzoate (PHB) with an all-trans polyprenyl group. Mediates the second step in the final reaction sequence of ubiquinone-8 (UQ-8) biosynthesis, which is the condensation of the polyisoprenoid side chain with PHB, generating the first membrane-bound Q intermediate 3-octaprenyl-4-hydroxybenzoate. This Pseudoalteromonas atlantica (strain T6c / ATCC BAA-1087) protein is 4-hydroxybenzoate octaprenyltransferase.